A 370-amino-acid polypeptide reads, in one-letter code: MLPRRLLAAWLAGTRGGGLLALLANQCRFVTGLRVRRAQQIAQLYGRLYSESSRRVLLGRLWRRLHGRPGHASALMAALAGVFVWDEERIQEEELQRSINEMKRLEEMSNMFQSSGVQHHPPEPKAQTEGNEDSEGKEQRWEMVMDKKHFKLWRRPITGTHLYQYRVFGTYTDVTPRQFFNVQLDTEYRKKWDALVIKLEVIERDVVSGSEVLHWVTHFPYPMYSRDYVYVRRYSVDQENNMMVLVSRAVEHPSVPESPEFVRVRSYESQMVIRPHKSFDENGFDYLLTYSDNPQTVFPRYCVSWMVSSGMPDFLEKLHMATLKAKNMEIKVKDYISAKPLEMSSEAKATSQSSERKNEGSCGPARIEYA.

A mitochondrion-targeting transit peptide spans 1-58 (MLPRRLLAAWLAGTRGGGLLALLANQCRFVTGLRVRRAQQIAQLYGRLYSESSRRVLL). Positions 86-111 (DEERIQEEELQRSINEMKRLEEMSNM) form a coiled coil. 2 disordered regions span residues 111 to 138 (MFQS…EGKE) and 343 to 370 (MSSE…IEYA). The region spanning 112-327 (FQSSGVQHHP…LHMATLKAKN (216 aa)) is the START domain.

Proteolytically cleaved by PARL. Expressed in nasal epithelial cells. Down-regulated in nasal epithelial cells in patients experiencing an asthma exacerbation as compared to stable asthmatics and healthy controls.

It is found in the mitochondrion. In terms of biological role, may play a protective role in mucosal tissues by preventing exaggerated allergic responses. The protein is StAR-related lipid transfer protein 7, mitochondrial (STARD7) of Homo sapiens (Human).